The chain runs to 229 residues: NAD(P)H-hydrate epimerase (229 aa).

Residues 10–217 form the YjeF N-terminal domain; sequence AINVDQELFN…ALQRKYDLNL (208 aa). Position 60-64 (60-64) interacts with (6S)-NADPHX; it reads NNGGD. Asparagine 61 and aspartate 125 together coordinate K(+). (6S)-NADPHX contacts are provided by residues 129–135 and aspartate 158; that span reads GFSFKPP. Serine 161 lines the K(+) pocket.

This sequence belongs to the NnrE/AIBP family. Requires K(+) as cofactor.

It carries out the reaction (6R)-NADHX = (6S)-NADHX. The enzyme catalyses (6R)-NADPHX = (6S)-NADPHX. In terms of biological role, catalyzes the epimerization of the S- and R-forms of NAD(P)HX, a damaged form of NAD(P)H that is a result of enzymatic or heat-dependent hydration. This is a prerequisite for the S-specific NAD(P)H-hydrate dehydratase to allow the repair of both epimers of NAD(P)HX. This is NAD(P)H-hydrate epimerase from Drosophila ananassae (Fruit fly).